We begin with the raw amino-acid sequence, 101 residues long: Small ribosomal subunit protein bS18c (101 aa).

Belongs to the bacterial ribosomal protein bS18 family. In terms of assembly, part of the 30S ribosomal subunit.

It localises to the plastid. Its subcellular location is the chloroplast. This is Small ribosomal subunit protein bS18c from Solanum bulbocastanum (Wild potato).